The chain runs to 62 residues: UPF0434 protein Rpic_2808 (62 aa).

It belongs to the UPF0434 family.

This is UPF0434 protein Rpic_2808 from Ralstonia pickettii (strain 12J).